The chain runs to 556 residues: 2-succinyl-5-enolpyruvyl-6-hydroxy-3-cyclohexene-1-carboxylate synthase (556 aa).

This sequence belongs to the TPP enzyme family. MenD subfamily. As to quaternary structure, homodimer. Mg(2+) serves as cofactor. Mn(2+) is required as a cofactor. It depends on thiamine diphosphate as a cofactor.

It carries out the reaction isochorismate + 2-oxoglutarate + H(+) = 5-enolpyruvoyl-6-hydroxy-2-succinyl-cyclohex-3-ene-1-carboxylate + CO2. Its pathway is quinol/quinone metabolism; 1,4-dihydroxy-2-naphthoate biosynthesis; 1,4-dihydroxy-2-naphthoate from chorismate: step 2/7. The protein operates within quinol/quinone metabolism; menaquinone biosynthesis. Catalyzes the thiamine diphosphate-dependent decarboxylation of 2-oxoglutarate and the subsequent addition of the resulting succinic semialdehyde-thiamine pyrophosphate anion to isochorismate to yield 2-succinyl-5-enolpyruvyl-6-hydroxy-3-cyclohexene-1-carboxylate (SEPHCHC). The protein is 2-succinyl-5-enolpyruvyl-6-hydroxy-3-cyclohexene-1-carboxylate synthase of Salmonella paratyphi A (strain AKU_12601).